A 620-amino-acid polypeptide reads, in one-letter code: Mitochondrial Rho GTPase 2 (620 aa).

At 1–594 (MRRDVRILLL…ELHPTSFWLR (594 aa)) the chain is on the cytoplasmic side. A Miro 1 domain is found at 2-168 (RRDVRILLLG…FYYAQKAVLH (167 aa)). Gly16, Lys17, Thr18, and Ser19 together coordinate GTP. Thr18 serves as a coordination point for Mg(2+). Asp57 provides a ligand contact to Mg(2+). GTP is bound at residue Ser59. Lys96 participates in a covalent cross-link: Glycyl lysine isopeptide (Lys-Gly) (interchain with G-Cter in ubiquitin). 5 residues coordinate GTP: Asn118, Lys119, Asp121, Ala149, and Lys150. A Glycyl lysine isopeptide (Lys-Gly) (interchain with G-Cter in ubiquitin) cross-link involves residue Lys119. Lys164 participates in a covalent cross-link: Glycyl lysine isopeptide (Lys-Gly) (interchain with G-Cter in ubiquitin). EF-hand domains are found at residues 184-219 (ACAQALTRIFRLSDQDRDHGLSDEELNAFQKSCFGH) and 304-339 (RGYQFVQRMFEKHDQDHDGVLSPTELQNLFSVFSGA). Ca(2+)-binding residues include Asp197, Asp199, Asp201, Glu208, Asp317, Asp319, Asp321, and Glu328. The region spanning 415–578 (RSVLMCKVLG…FTQLATMATF (164 aa)) is the Miro 2 domain. Positions 427, 429, 430, 431, and 432 each coordinate GTP. Ser431 contacts Mg(2+). Glu473 is a binding site for Mg(2+). 3 residues coordinate GTP: Lys527, Asp529, and Cys558. A helical; Anchor for type IV membrane protein membrane pass occupies residues 595-617 (GVLVAVGTAVAAVLSFSLYRVLV). At 618-620 (KSR) the chain is on the mitochondrial intermembrane side.

The protein belongs to the mitochondrial Rho GTPase family. As to quaternary structure, homodimer. Interacts with the kinesin-binding proteins TRAK1/OIP106 and TRAK2/GRIF1, forming a link between mitochondria and the trafficking apparatus of the microtubules. Interacts with ARMCX3. Found in a complex with KIF5B, OGT, RHOT1 and TRAK1. Ubiquitinated by PRKN in a PINK1-dependent manner, leading to its degradation. Ubiquitously expressed.

It localises to the mitochondrion outer membrane. It carries out the reaction GTP + H2O = GDP + phosphate + H(+). The catalysed reaction is ATP + H2O = ADP + phosphate + H(+). The enzyme catalyses UTP + H2O = UDP + phosphate + H(+). Atypical mitochondrial nucleoside-triphosphatase (NTPase) involved in mitochondrial trafficking. Probably involved in control of anterograde transport of mitochondria and their subcellular distribution. Can hydrolyze GTP, ATP and UTP. This chain is Mitochondrial Rho GTPase 2 (Rhot2), found in Mus musculus (Mouse).